The primary structure comprises 138 residues: ATP synthase epsilon chain (138 aa).

Belongs to the ATPase epsilon chain family. As to quaternary structure, F-type ATPases have 2 components, CF(1) - the catalytic core - and CF(0) - the membrane proton channel. CF(1) has five subunits: alpha(3), beta(3), gamma(1), delta(1), epsilon(1). CF(0) has three main subunits: a, b and c.

The protein resides in the cell membrane. Its function is as follows. Produces ATP from ADP in the presence of a proton gradient across the membrane. The sequence is that of ATP synthase epsilon chain from Caldanaerobacter subterraneus subsp. tengcongensis (strain DSM 15242 / JCM 11007 / NBRC 100824 / MB4) (Thermoanaerobacter tengcongensis).